A 307-amino-acid chain; its full sequence is MPKKCRHLLQTSDLSLDEIKLLLEKASVYANDFNAVSLETKEKMHNKIIVALFFENSTRTVSSFEIASLRLGAKIVKLNMQTSSASKGETLTDTFKNIHAMQPDAIITRHAFSSAPFKLAEFSQCPLINAGSGVSAHPTQALLDLLTLYQHFGSLENLKGKKIAFIGDVKNSRVANSNIKLLQRLGLEIMLCAPSSMLPSVSLKTTHNVEEAIAFADILMSLRTQTERHNTPIFASLKDYGNAYCITQQRLKAHAKNKEVIILHPGPVHRDIDIESAVLEDERSKVLEQVKNGVAMRMAVLEFLLLD.

The carbamoyl phosphate site is built by Arg59 and Thr60. Lys87 contacts L-aspartate. Carbamoyl phosphate is bound by residues Arg109, His137, and Gln140. L-aspartate is bound by residues Arg173 and Arg223. Residues Gly266 and Pro267 each contribute to the carbamoyl phosphate site.

It belongs to the aspartate/ornithine carbamoyltransferase superfamily. ATCase family. As to quaternary structure, heterododecamer (2C3:3R2) of six catalytic PyrB chains organized as two trimers (C3), and six regulatory PyrI chains organized as three dimers (R2).

The enzyme catalyses carbamoyl phosphate + L-aspartate = N-carbamoyl-L-aspartate + phosphate + H(+). Its pathway is pyrimidine metabolism; UMP biosynthesis via de novo pathway; (S)-dihydroorotate from bicarbonate: step 2/3. Functionally, catalyzes the condensation of carbamoyl phosphate and aspartate to form carbamoyl aspartate and inorganic phosphate, the committed step in the de novo pyrimidine nucleotide biosynthesis pathway. The polypeptide is Aspartate carbamoyltransferase catalytic subunit (Helicobacter pylori (strain ATCC 700392 / 26695) (Campylobacter pylori)).